Here is a 436-residue protein sequence, read N- to C-terminus: Bifunctional protein GlmU (436 aa).

Residues 1–225 (MNNNTSIIIL…EQNFMGINDK (225 aa)) are pyrophosphorylase. UDP-N-acetyl-alpha-D-glucosamine contacts are provided by residues 10–13 (LAAG), Lys24, Gln76, and 83–84 (GT). Position 104 (Asp104) interacts with Mg(2+). UDP-N-acetyl-alpha-D-glucosamine-binding residues include Gly137, Glu151, Asn166, and Asn223. Position 223 (Asn223) interacts with Mg(2+). The linker stretch occupies residues 226-246 (FQLSIAEKIMQDEIKQNLMKA). Positions 247–436 (GVLMRMPESI…KFFGKDDVKK (190 aa)) are N-acetyltransferase. Residues Arg310 and Lys327 each contribute to the UDP-N-acetyl-alpha-D-glucosamine site. His338 functions as the Proton acceptor in the catalytic mechanism. UDP-N-acetyl-alpha-D-glucosamine contacts are provided by Tyr341 and Asn352. Residues 361–362 (NY), Ser380, Ala398, and Arg415 each bind acetyl-CoA.

In the N-terminal section; belongs to the N-acetylglucosamine-1-phosphate uridyltransferase family. This sequence in the C-terminal section; belongs to the transferase hexapeptide repeat family. As to quaternary structure, homotrimer. Mg(2+) is required as a cofactor.

The protein localises to the cytoplasm. The catalysed reaction is alpha-D-glucosamine 1-phosphate + acetyl-CoA = N-acetyl-alpha-D-glucosamine 1-phosphate + CoA + H(+). The enzyme catalyses N-acetyl-alpha-D-glucosamine 1-phosphate + UTP + H(+) = UDP-N-acetyl-alpha-D-glucosamine + diphosphate. The protein operates within nucleotide-sugar biosynthesis; UDP-N-acetyl-alpha-D-glucosamine biosynthesis; N-acetyl-alpha-D-glucosamine 1-phosphate from alpha-D-glucosamine 6-phosphate (route II): step 2/2. Its pathway is nucleotide-sugar biosynthesis; UDP-N-acetyl-alpha-D-glucosamine biosynthesis; UDP-N-acetyl-alpha-D-glucosamine from N-acetyl-alpha-D-glucosamine 1-phosphate: step 1/1. It participates in bacterial outer membrane biogenesis; LPS lipid A biosynthesis. Catalyzes the last two sequential reactions in the de novo biosynthetic pathway for UDP-N-acetylglucosamine (UDP-GlcNAc). The C-terminal domain catalyzes the transfer of acetyl group from acetyl coenzyme A to glucosamine-1-phosphate (GlcN-1-P) to produce N-acetylglucosamine-1-phosphate (GlcNAc-1-P), which is converted into UDP-GlcNAc by the transfer of uridine 5-monophosphate (from uridine 5-triphosphate), a reaction catalyzed by the N-terminal domain. The polypeptide is Bifunctional protein GlmU (Campylobacter concisus (strain 13826)).